A 53-amino-acid chain; its full sequence is uncharacterized protein (53 aa).

This is an uncharacterized protein from Saccharomyces cerevisiae (strain ATCC 204508 / S288c) (Baker's yeast).